The chain runs to 63 residues: UPF0434 protein BAV2101 (63 aa).

Belongs to the UPF0434 family.

This Bordetella avium (strain 197N) protein is UPF0434 protein BAV2101.